The following is a 179-amino-acid chain: Large ribosomal subunit protein uL5 (179 aa).

Belongs to the universal ribosomal protein uL5 family. As to quaternary structure, part of the 50S ribosomal subunit; part of the 5S rRNA/L5/L18/L25 subcomplex. Contacts the 5S rRNA and the P site tRNA. Forms a bridge to the 30S subunit in the 70S ribosome.

In terms of biological role, this is one of the proteins that bind and probably mediate the attachment of the 5S RNA into the large ribosomal subunit, where it forms part of the central protuberance. In the 70S ribosome it contacts protein S13 of the 30S subunit (bridge B1b), connecting the 2 subunits; this bridge is implicated in subunit movement. Contacts the P site tRNA; the 5S rRNA and some of its associated proteins might help stabilize positioning of ribosome-bound tRNAs. In Anaplasma marginale (strain Florida), this protein is Large ribosomal subunit protein uL5.